The primary structure comprises 747 residues: MFNEITKSVTWNGKVLELSTGKIARQADGSVTVKMGNSVLLCTAVVANTAKEGIGFFPLTINYREMAYAVGKIPGGFFKREGKASEREVLVSRLIDRPIRPLFHPAFVNETHVTCTVLSYDPETPVDILAIIGASAALALSPAPYLEIVAASKVGLINGEFVLNPTLELLKTSQLDLVVAGTTESVMMVESEAHLLSEAQMLEAVKFGFESFQPVVKIIKELAEEAKRPKLEMQDLYPSVLKNEIEQLFAKEIEQAFAIKSKQERSTSLDLISEKVITHFISNIENKKYNNYQIESALKSVESDILRKEILEKNKRIDGRSTMDIRQIACEVGLLPSAHGSALFTRGETQSLVSSTLGTSLDEQIVDNLEGEYKERFMLNYIFPPYSVNEAMPMKAPSRREVGHGKLAWRAINPILPNKVQFPYSIRVVAETTESNGSSSMATVCGSSLALMQTGIPIKAPVAGIAMGLVKEGKKFAVLSDILGDEDYFGDMDFKVAGTSEGITALQMDIKISGVDFKIMKVALEQARLGRLHILEQMNKVISKPNSELSKNAPSTTTIKIDKDKIRDIIGPGGKIIKEICETSGAKIDISDDGTVSVYAADRDKLKIASDKIKAIAIEPEIGEIFNGTVTKILDSGAFINYLGNKDGFVHISEISEERIDTVSSVIKQGDIVKVKLIGFDNKGKAKLTIKNADKDKSLNNPKPQNSINNAKENSEHVRCDSIKKRAWNEDNNAETAEFITERKYFN.

The Mg(2+) site is built by Asp487 and Asp493. The 60-residue stretch at 554–613 folds into the KH domain; the sequence is PSTTTIKIDKDKIRDIIGPGGKIIKEICETSGAKIDISDDGTVSVYAADRDKLKIASDKI. The 69-residue stretch at 623 to 691 folds into the S1 motif domain; that stretch reads GEIFNGTVTK…NKGKAKLTIK (69 aa). The disordered stretch occupies residues 694 to 716; the sequence is DKDKSLNNPKPQNSINNAKENSE. The segment covering 699 to 712 has biased composition (polar residues); the sequence is LNNPKPQNSINNAK.

The protein belongs to the polyribonucleotide nucleotidyltransferase family. Mg(2+) serves as cofactor.

Its subcellular location is the cytoplasm. The enzyme catalyses RNA(n+1) + phosphate = RNA(n) + a ribonucleoside 5'-diphosphate. Its function is as follows. Involved in mRNA degradation. Catalyzes the phosphorolysis of single-stranded polyribonucleotides processively in the 3'- to 5'-direction. The chain is Polyribonucleotide nucleotidyltransferase from Rickettsia canadensis (strain McKiel).